The chain runs to 407 residues: MPGHLQEGFGCVVTNRFDQLFDDESDPFEVLKAAENKKKEAGGGGVGGPGAKSAAQAAAQTNSNAAGKQLRKESQKDRKNPLPPNVGVVDKKEETQPPVALKKEGIRRVGRRPDQQLQGEGKIIDRRPERRPPRERRFEKPLEEKGEGGEFSVDRPIIDRPIRGRGGLGRGRGGRGRGMGRGDGFDSRGKREFDRHSGSDRSSFSHYSGLKHEDKRGGSGSHNWGTVKDELTESPKYIQKQISYNCSDLDQSNVTEETPEGEEHPVADTENKENEVEEVKEEGPKEMTLDEWKAIQNKDRAKVEFNIRKPNEGADGQWKKGFVLHKSKSEEAHAEDSVMDHHFRKPANDITSQLEINFGDLGRPGRGGRGGRGGRGRGGRPNRGSRTDKSSASAPDVDDPEAFPALA.

At serine 25 the chain carries Phosphoserine. The tract at residues 33–227 (AAENKKKEAG…GSGSHNWGTV (195 aa)) is disordered. Positions 51–68 (AKSAAQAAAQTNSNAAGK) are enriched in low complexity. Lysine 52 carries the N6-acetyllysine; alternate modification. Lysine 52 is covalently cross-linked (Glycyl lysine isopeptide (Lys-Gly) (interchain with G-Cter in SUMO1); alternate). The residue at position 68 (lysine 68) is an N6-acetyllysine. Basic and acidic residues-rich tracts occupy residues 70–80 (LRKESQKDRKN), 89–114 (VDKK…RRPD), and 122–162 (KIID…DRPI). Residue lysine 102 forms a Glycyl lysine isopeptide (Lys-Gly) (interchain with G-Cter in SUMO1); alternate linkage. Residue lysine 102 forms a Glycyl lysine isopeptide (Lys-Gly) (interchain with G-Cter in SUMO2) linkage. Residue lysine 102 forms a Glycyl lysine isopeptide (Lys-Gly) (interchain with G-Cter in SUMO2); alternate linkage. Lysine 122 and lysine 140 each carry N6-acetyllysine. The span at 164–182 (GRGGLGRGRGGRGRGMGRG) shows a compositional bias: gly residues. Residues arginine 165 and arginine 188 each carry the omega-N-methylarginine modification. Basic and acidic residues predominate over residues 183–199 (DGFDSRGKREFDRHSGS). A phosphoserine mark is found at serine 197, serine 199, serine 203, serine 205, and serine 208. The residue at position 211 (lysine 211) is an N6-acetyllysine; alternate. Residue lysine 211 forms a Glycyl lysine isopeptide (Lys-Gly) (interchain with G-Cter in SUMO2); alternate linkage. Arginine 216 is modified (omega-N-methylarginine). The residue at position 221 (serine 221) is a Phosphoserine. Threonine 226 is modified (phosphothreonine). Lysine 228 is covalently cross-linked (Glycyl lysine isopeptide (Lys-Gly) (interchain with G-Cter in SUMO1); alternate). Lysine 228 participates in a covalent cross-link: Glycyl lysine isopeptide (Lys-Gly) (interchain with G-Cter in SUMO2); alternate. Serine 234 carries the post-translational modification Phosphoserine. The segment covering 242 to 256 (ISYNCSDLDQSNVTE) has biased composition (polar residues). 2 disordered regions span residues 242-291 (ISYN…TLDE) and 327-407 (SKSE…PALA). A compositionally biased stretch (basic and acidic residues) spans 261 to 274 (GEEHPVADTENKEN). Lysine 280 is covalently cross-linked (Glycyl lysine isopeptide (Lys-Gly) (interchain with G-Cter in SUMO1); alternate). Residue lysine 280 forms a Glycyl lysine isopeptide (Lys-Gly) (interchain with G-Cter in SUMO2) linkage. A Glycyl lysine isopeptide (Lys-Gly) (interchain with G-Cter in SUMO2); alternate cross-link involves residue lysine 280. Basic and acidic residues-rich tracts occupy residues 281–291 (EEGPKEMTLDE) and 327–341 (SKSE…VMDH). The residue at position 328 (lysine 328) is an N6-acetyllysine. Serine 329 is modified (phosphoserine). Gly residues predominate over residues 362–371 (GRPGRGGRGG). Residues arginine 363, arginine 366, and arginine 369 each carry the omega-N-methylarginine modification. A phosphoserine mark is found at serine 391 and serine 393.

Belongs to the SERBP1-HABP4 family. In terms of assembly, associates with mature 80S ribosomes. Interacts with EEF2/eEF2; interaction sequesters EEF2/eEF2 at the A-site of the ribosome, thereby blocking the interaction sites of the mRNA-tRNA complex, promoting ribosome stabilization and hibernation. Interacts with SPIN1. Interacts with CHD3 and TDRD3. Interacts with ZDHHC17 (via ANK repeats). In terms of processing, phosphorylation by MTOR inhibits SERBP1 and relieves ribosome hibernation.

Its function is as follows. Ribosome-binding protein that promotes ribosome hibernation, a process during which ribosomes are stabilized in an inactive state and preserved from proteasomal degradation. Acts via its association with EEF2/eEF2 factor, sequestering EEF2/eEF2 at the A-site of the ribosome and promoting ribosome stabilization and storage in an inactive state. May also play a role in the regulation of mRNA stability: binds to the 3'-most 134 nt of the SERPINE1/PAI1 mRNA, a region which confers cyclic nucleotide regulation of message decay. Seems to play a role in PML-nuclear bodies formation. In Oryctolagus cuniculus (Rabbit), this protein is SERPINE1 mRNA-binding protein 1.